The chain runs to 186 residues: Ribosome rescue factor SmrB (186 aa).

The 76-residue stretch at 99-174 (IDLHGLTQHQ…SDAAIIVIIE (76 aa)) folds into the Smr domain.

The protein belongs to the SmrB family. Associates with collided ribosomes, but not with correctly translating polysomes.

Functionally, acts as a ribosome collision sensor. Detects stalled/collided disomes (pairs of ribosomes where the leading ribosome is stalled and a second ribosome has collided with it) and endonucleolytically cleaves mRNA at the 5' boundary of the stalled ribosome. Stalled/collided disomes form a new interface (primarily via the 30S subunits) that binds SmrB. Cleaved mRNA becomes available for tmRNA ligation, leading to ribosomal subunit dissociation and rescue of stalled ribosomes. This chain is Ribosome rescue factor SmrB, found in Buchnera aphidicola subsp. Acyrthosiphon pisum (strain Tuc7).